The following is a 221-amino-acid chain: Probable glutathione S-transferase parC (221 aa).

One can recognise a GST N-terminal domain in the interval 4 to 83 (EEVILLDFWP…YIEEVWKDKA (80 aa)). Glutathione is bound by residues S14, K41, I55, and 67-68 (ES). The GST C-terminal domain occupies 90 to 214 (DPYDRAQARF…PKVLEFVKVL (125 aa)).

The protein belongs to the GST superfamily. Phi family. As to expression, abundant in seedlings and roots. It is also found in the shoot tips, flowers and leaves.

The enzyme catalyses RX + glutathione = an S-substituted glutathione + a halide anion + H(+). Functionally, conjugation of reduced glutathione to a wide number of exogenous and endogenous hydrophobic electrophiles. This chain is Probable glutathione S-transferase parC (PARC), found in Nicotiana tabacum (Common tobacco).